Here is a 284-residue protein sequence, read N- to C-terminus: 4-diphosphocytidyl-2-C-methyl-D-erythritol kinase (284 aa).

Residue Lys9 is part of the active site. 90-100 (PLVSGLGGDSS) is a binding site for ATP. Residue Asp132 is part of the active site.

Belongs to the GHMP kinase family. IspE subfamily.

The enzyme catalyses 4-CDP-2-C-methyl-D-erythritol + ATP = 4-CDP-2-C-methyl-D-erythritol 2-phosphate + ADP + H(+). The protein operates within isoprenoid biosynthesis; isopentenyl diphosphate biosynthesis via DXP pathway; isopentenyl diphosphate from 1-deoxy-D-xylulose 5-phosphate: step 3/6. Catalyzes the phosphorylation of the position 2 hydroxy group of 4-diphosphocytidyl-2C-methyl-D-erythritol. This chain is 4-diphosphocytidyl-2-C-methyl-D-erythritol kinase, found in Dehalococcoides mccartyi (strain ATCC BAA-2100 / JCM 16839 / KCTC 5957 / BAV1).